The sequence spans 291 residues: Polyamine aminopropyltransferase (291 aa).

Residues P5–L245 form the PABS domain. Q36 contacts S-methyl-5'-thioadenosine. Spermidine is bound by residues H67 and E91. Residues D111 and D143 to G144 each bind S-methyl-5'-thioadenosine. D164 functions as the Proton acceptor in the catalytic mechanism.

Belongs to the spermidine/spermine synthase family. As to quaternary structure, homodimer or homotetramer.

It localises to the cytoplasm. The enzyme catalyses S-adenosyl 3-(methylsulfanyl)propylamine + putrescine = S-methyl-5'-thioadenosine + spermidine + H(+). Its pathway is amine and polyamine biosynthesis; spermidine biosynthesis; spermidine from putrescine: step 1/1. Its function is as follows. Catalyzes the irreversible transfer of a propylamine group from the amino donor S-adenosylmethioninamine (decarboxy-AdoMet) to putrescine (1,4-diaminobutane) to yield spermidine. The sequence is that of Polyamine aminopropyltransferase from Pyrobaculum neutrophilum (strain DSM 2338 / JCM 9278 / NBRC 100436 / V24Sta) (Thermoproteus neutrophilus).